The sequence spans 436 residues: Transcription termination factor Rho (436 aa).

Residues 65-140 form the Rho RNA-BD domain; that stretch reads LVFVKGVLEI…IRMESVNGLP (76 aa). ATP-binding positions include 185–190, 197–202, and R228; these read GKGQRG and KAGKTV.

The protein belongs to the Rho family. As to quaternary structure, homohexamer. The homohexamer assembles into an open ring structure.

Its function is as follows. Facilitates transcription termination by a mechanism that involves Rho binding to the nascent RNA, activation of Rho's RNA-dependent ATPase activity, and release of the mRNA from the DNA template. This chain is Transcription termination factor Rho, found in Aquifex aeolicus (strain VF5).